The chain runs to 165 residues: MEAESPKERVQGVSGESWDPERGVKEREDTSSKKGKGVDIPQVLVSQSCAARECAKDEIRKFTKVPVEIDTVGGKPLVFMMWASEEKPVHRKRLHAEASRDVFGCESCEEVFDSFKKLQLHKAQHKGTSTEPSNSLFCPVCKKTFDEKRKLMLHSRYHKIDKDGR.

Basic and acidic residues-rich tracts occupy residues 1–10 (MEAESPKERV) and 19–32 (DPERGVKEREDTSS). Positions 1-38 (MEAESPKERVQGVSGESWDPERGVKEREDTSSKKGKGV) are disordered. 2 C2H2-type zinc fingers span residues 103–125 (FGCESCEEVFDSFKKLQLHKAQH) and 136–158 (LFCPVCKKTFDEKRKLMLHSRYH).

The polypeptide is Zinc finger C2H2 protein ECU11_0990 (Encephalitozoon cuniculi (strain GB-M1) (Microsporidian parasite)).